The primary structure comprises 530 residues: CTP synthase (530 aa).

The amidoligase domain stretch occupies residues 1–264 (MPKLIIVTGG…GDFLTRRLRL (264 aa)). Position 13 (serine 13) interacts with CTP. A UTP-binding site is contributed by serine 13. Residue 14–19 (GVGKGV) coordinates ATP. Tyrosine 54 contributes to the L-glutamine binding site. Aspartate 71 is an ATP binding site. Mg(2+) contacts are provided by aspartate 71 and glutamate 139. Residues 146–148 (DYE), 185–190 (KTKPLQ), and lysine 221 each bind CTP. UTP contacts are provided by residues 185–190 (KTKPLQ) and lysine 221. Residues 289-530 (SVGMCGKYVE…LLKAALFAKR (242 aa)) form the Glutamine amidotransferase type-1 domain. Glycine 351 is an L-glutamine binding site. Cysteine 378 (nucleophile; for glutamine hydrolysis) is an active-site residue. L-glutamine is bound by residues 379-382 (FGMQ), glutamate 402, and arginine 459. Residues histidine 504 and glutamate 506 contribute to the active site.

The protein belongs to the CTP synthase family. Homotetramer.

The enzyme catalyses UTP + L-glutamine + ATP + H2O = CTP + L-glutamate + ADP + phosphate + 2 H(+). The catalysed reaction is L-glutamine + H2O = L-glutamate + NH4(+). It catalyses the reaction UTP + NH4(+) + ATP = CTP + ADP + phosphate + 2 H(+). It functions in the pathway pyrimidine metabolism; CTP biosynthesis via de novo pathway; CTP from UDP: step 2/2. With respect to regulation, allosterically activated by GTP, when glutamine is the substrate; GTP has no effect on the reaction when ammonia is the substrate. The allosteric effector GTP functions by stabilizing the protein conformation that binds the tetrahedral intermediate(s) formed during glutamine hydrolysis. Inhibited by the product CTP, via allosteric rather than competitive inhibition. Its function is as follows. Catalyzes the ATP-dependent amination of UTP to CTP with either L-glutamine or ammonia as the source of nitrogen. Regulates intracellular CTP levels through interactions with the four ribonucleotide triphosphates. The chain is CTP synthase from Pyrobaculum aerophilum (strain ATCC 51768 / DSM 7523 / JCM 9630 / CIP 104966 / NBRC 100827 / IM2).